We begin with the raw amino-acid sequence, 257 residues long: NAD-capped RNA hydrolase NudC (257 aa).

Residues lysine 25 and arginine 69 each coordinate substrate. Zn(2+) is bound by residues cysteine 98 and cysteine 101. Glutamate 111 lines the substrate pocket. Zn(2+) contacts are provided by cysteine 116 and cysteine 119. Tyrosine 124 is a binding site for substrate. In terms of domain architecture, Nudix hydrolase spans 125–248 (PQIAPCIIVA…TVARRLIEDT (124 aa)). A divalent metal cation-binding residues include alanine 158, glutamate 174, and glutamate 178. The Nudix box signature appears at 159–180 (GFVEVGETLEQAVAREVMEESG). Residue 192 to 199 (QPWPFPQS) coordinates substrate. Position 219 (glutamate 219) interacts with a divalent metal cation. Alanine 241 lines the substrate pocket.

Belongs to the Nudix hydrolase family. NudC subfamily. In terms of assembly, homodimer. Mg(2+) serves as cofactor. It depends on Mn(2+) as a cofactor. Requires Zn(2+) as cofactor.

The catalysed reaction is a 5'-end NAD(+)-phospho-ribonucleoside in mRNA + H2O = a 5'-end phospho-adenosine-phospho-ribonucleoside in mRNA + beta-nicotinamide D-ribonucleotide + 2 H(+). It carries out the reaction NAD(+) + H2O = beta-nicotinamide D-ribonucleotide + AMP + 2 H(+). It catalyses the reaction NADH + H2O = reduced beta-nicotinamide D-ribonucleotide + AMP + 2 H(+). Its function is as follows. mRNA decapping enzyme that specifically removes the nicotinamide adenine dinucleotide (NAD) cap from a subset of mRNAs by hydrolyzing the diphosphate linkage to produce nicotinamide mononucleotide (NMN) and 5' monophosphate mRNA. The NAD-cap is present at the 5'-end of some mRNAs and stabilizes RNA against 5'-processing. Has preference for mRNAs with a 5'-end purine. Catalyzes the hydrolysis of a broad range of dinucleotide pyrophosphates. This Shigella boydii serotype 18 (strain CDC 3083-94 / BS512) protein is NAD-capped RNA hydrolase NudC.